A 73-amino-acid polypeptide reads, in one-letter code: Large ribosomal subunit protein bL31 (73 aa).

This sequence belongs to the bacterial ribosomal protein bL31 family. Type A subfamily. Part of the 50S ribosomal subunit.

Functionally, binds the 23S rRNA. In Brucella abortus (strain 2308), this protein is Large ribosomal subunit protein bL31.